The sequence spans 432 residues: MGKPGGAKTRTAVCLSDGVFFLAGAFMSLTLVWSYFSIFSPSFTSLRHDGKPVQCSGLDMQFDPSEPGFYDDPDLSYSIEKPITKWDEKRNQWFESHPSFKPGSENRIVMVTGSQSSPCKNPIGDHLLLRCFKNKVDYARIHGHDIFYSNSLLHPKMNSYWAKLPVVKAAMLAHPEAEWIWWVDSDAIFTDMEFKPPLHRYRQHNLVVHGWPNIIYEKQSWTALNAGVFLIRNCQWSMDLIDTWKSMGPVSPDYKKWGPIQRSIFKDKLFPESDDQTALIYLLYKHKELYYPKIYLEAEYYLQGYWIGVFGDFANVTERYLEMEREDDTLRRRHAEKVSERYGAFREERFLKGEFGGRGSRRRAFITHFTGCQPCSGDHNPSYDGDTCWNEMIRALNFADNQVMRVYGYVHSDLSKTSPLQPLPFDYPNEAW.

Topologically, residues 1-18 (MGKPGGAKTRTAVCLSDG) are cytoplasmic. A helical; Signal-anchor for type II membrane protein transmembrane segment spans residues 19–39 (VFFLAGAFMSLTLVWSYFSIF). Residues 40 to 432 (SPSFTSLRHD…LPFDYPNEAW (393 aa)) lie on the Lumenal side of the membrane. Residue Asn-315 is glycosylated (N-linked (GlcNAc...) asparagine).

This sequence belongs to the glycosyltransferase 34 family.

The protein localises to the golgi apparatus membrane. Functionally, probable glycosyltransferase that may be involved in the biosynthesis of xyloglucan. This chain is Glycosyltransferase 6 (GT6), found in Arabidopsis thaliana (Mouse-ear cress).